Reading from the N-terminus, the 300-residue chain is MTIPTKKLDYWSQKGATQAPKNLREKIEKVLTANESKIKRKNQLDIYLQGSYRNNTNIFGSSDVDIVVQSNATFFSNISKLEAYERKIYNQTFDEATYTWRYFKNDVIKTLQYAFGSSNVEIGNKSIKIFTEDYEADVIPCFEHRNYLSFGNSEEDREYIPGIKFFTTDKGESIINYPKKHYVFGVDKNERTNNYYKPTIRIFKNIKKQLIKQKRITKKVVSSYFIESLLYNVPDRYFCIDNASNRVADILNWLTKNQDSFSTFICQNEQMNLFGSSQEQWNEEDADKFIFEINKFWNEW.

Positions 63, 65, and 137 each coordinate Mg(2+).

The protein belongs to the CD-NTase family. E01 subfamily. Requires Mg(2+) as cofactor.

With respect to regulation, binds to and probably activated by a virus-derived, approximately 400 nucleotide RNA (called CBASS-activating bacteriophage RNA, cabRNA) that begins in the viral terminase subunit terS and extends into terL, as well as by a shorter RNA with part of the cabRNA sequence able to form a hairpin. RNA secondary and/or tertiary structure, as well as viral infection itself, are important for CdnE activation. In terms of biological role, cyclic nucleotide synthase (second messenger synthase) of a CBASS antivirus system. CBASS (cyclic oligonucleotide-based antiphage signaling system) provides immunity against bacteriophage. The CD-NTase protein synthesizes cyclic nucleotides in response to infection; these serve as specific second messenger signals. The signals activate a diverse range of effectors, leading to bacterial cell death and thus abortive phage infection. A type I-B CBASS system. Its function is as follows. Protects S.aureus against phage infection. When the CBASS operon (cdnE and the following gene) is introduced in S.aureus strain RN4220 there is strong protection against lytic DNA phages 80alpha-vir and phi-NM1-gamma-6 but little to no protection against phages phi-NM4-gamma-4 or phi-12-gamma-3. The sequence is that of Cyclic nucleotide synthase CdnE01 from Staphylococcus haemolyticus.